The following is a 318-amino-acid chain: Death effector domain-containing protein (318 aa).

Residues 25–103 (SLHRMFDIVG…RHDLLPYVTL (79 aa)) form the DED domain. The segment at 128 to 191 (PRALSDPEPR…SVTPDPKEKQ (64 aa)) is disordered.

As to quaternary structure, interacts with CASP8, CASP10, KRT8, KRT18, CASP3 and FADD. Homodimerizes and heterodimerizes with DEDD2. In terms of processing, exists predominantly in a mono- or diubiquitinated form. As to expression, widely expressed with highest levels in testis. Within the testis, highly expressed in germ cells but not expressed in Sertoli cells.

The protein localises to the cytoplasm. It localises to the nucleus. Its subcellular location is the nucleolus. Its function is as follows. A scaffold protein that directs CASP3 to certain substrates and facilitates their ordered degradation during apoptosis. May also play a role in mediating CASP3 cleavage of KRT18. Regulates degradation of intermediate filaments during apoptosis. May play a role in the general transcription machinery in the nucleus and might be an important regulator of the activity of GTF3C3. Inhibits DNA transcription in vitro. The sequence is that of Death effector domain-containing protein (Dedd) from Rattus norvegicus (Rat).